Reading from the N-terminus, the 568-residue chain is uncharacterized protein (568 aa).

A compositionally biased stretch (basic and acidic residues) spans 334 to 346; it reads DDNEEKNNDRPKI. 2 disordered regions span residues 334–382 and 436–479; these read DDNE…NDQN and QVEE…SCKN. Positions 458 to 477 are enriched in low complexity; that stretch reads KIASSASKNDNSNNKNSKSC.

This sequence to yeast YJL043w.

This is an uncharacterized protein from Saccharomyces cerevisiae (strain ATCC 204508 / S288c) (Baker's yeast).